Consider the following 120-residue polypeptide: Glycophorin-A (120 aa).

The residue at position 1 (Gln1) is a Pyrrolidone carboxylic acid. The segment at 1–40 is disordered; that stretch reads QTIATGSPPIAGTSDLSTITSAATPTFTTEQDGREQGDGL. O-linked (GalNAc...) threonine glycosylation is found at Thr2 and Thr5. O-linked (GalNAc...) serine glycosylation is present at Ser7. The O-linked (GalNAc...) threonine glycan is linked to Thr13. O-linked (GalNAc...) serine glycosylation occurs at Ser17. The segment covering 17–29 has biased composition (low complexity); sequence STITSAATPTFTT. 2 O-linked (GalNAc...) threonine glycosylation sites follow: Thr18 and Thr20. An O-linked (GalNAc...) serine glycan is attached at Ser21. O-linked (GalNAc...) threonine glycans are attached at residues Thr24 and Thr28. The helical transmembrane segment at 50-72 threads the bilayer; sequence VITVIILGVMAGIIGIILLLAYV. Positions 78 to 120 are disordered; it reads KRPPADVPPPASTVPSADAPPPVSEDDETSLTSVETDYPGDSQ. Residues 82–100 show a composition bias toward pro residues; it reads ADVPPPASTVPSADAPPPV. The span at 107–120 shows a compositional bias: polar residues; the sequence is SLTSVETDYPGDSQ. Ser119 bears the Phosphoserine mark.

Belongs to the glycophorin-A family. In terms of assembly, homodimer.

It is found in the membrane. Glycophorin A is the major intrinsic membrane sialoglycoprotein of the erythrocyte. Appears to be important for the function of SLC4A1 and is required for high activity of SLC4A1. May be involved in translocation of SLC4A1 to the plasma membrane. The polypeptide is Glycophorin-A (Equus caballus (Horse)).